A 750-amino-acid chain; its full sequence is Photosystem I P700 chlorophyll a apoprotein A1 (750 aa).

The next 8 membrane-spanning stretches (helical) occupy residues Val-70–Ala-93, Leu-156–His-179, Leu-195–Leu-219, Ile-291–Tyr-309, Trp-346–Tyr-369, Leu-385–Val-411, Ala-433–His-455, and Phe-531–Leu-549. Cys-573 and Cys-582 together coordinate [4Fe-4S] cluster. The next 2 membrane-spanning stretches (helical) occupy residues His-589 to Trp-610 and Leu-664 to Phe-686. His-675 is a chlorophyll a' binding site. Met-683 and Tyr-691 together coordinate chlorophyll a. Residue Trp-692 participates in phylloquinone binding. A helical transmembrane segment spans residues Ala-724 to Ala-744.

This sequence belongs to the PsaA/PsaB family. In terms of assembly, the PsaA/B heterodimer binds the P700 chlorophyll special pair and subsequent electron acceptors. PSI consists of a core antenna complex that captures photons, and an electron transfer chain that converts photonic excitation into a charge separation. The eukaryotic PSI reaction center is composed of at least 11 subunits. It depends on P700 is a chlorophyll a/chlorophyll a' dimer, A0 is one or more chlorophyll a, A1 is one or both phylloquinones and FX is a shared 4Fe-4S iron-sulfur center. as a cofactor.

The protein localises to the plastid. It localises to the chloroplast thylakoid membrane. The enzyme catalyses reduced [plastocyanin] + hnu + oxidized [2Fe-2S]-[ferredoxin] = oxidized [plastocyanin] + reduced [2Fe-2S]-[ferredoxin]. PsaA and PsaB bind P700, the primary electron donor of photosystem I (PSI), as well as the electron acceptors A0, A1 and FX. PSI is a plastocyanin-ferredoxin oxidoreductase, converting photonic excitation into a charge separation, which transfers an electron from the donor P700 chlorophyll pair to the spectroscopically characterized acceptors A0, A1, FX, FA and FB in turn. Oxidized P700 is reduced on the lumenal side of the thylakoid membrane by plastocyanin. The protein is Photosystem I P700 chlorophyll a apoprotein A1 of Coffea arabica (Arabian coffee).